A 206-amino-acid chain; its full sequence is Probable chemoreceptor glutamine deamidase CheD 1 (206 aa).

Belongs to the CheD family.

It carries out the reaction L-glutaminyl-[protein] + H2O = L-glutamyl-[protein] + NH4(+). Functionally, probably deamidates glutamine residues to glutamate on methyl-accepting chemotaxis receptors (MCPs), playing an important role in chemotaxis. This is Probable chemoreceptor glutamine deamidase CheD 1 from Shewanella oneidensis (strain ATCC 700550 / JCM 31522 / CIP 106686 / LMG 19005 / NCIMB 14063 / MR-1).